Reading from the N-terminus, the 225-residue chain is NAD(P)H-quinone oxidoreductase subunit K, chloroplastic (225 aa).

Residues C43, C44, C108, and C139 each coordinate [4Fe-4S] cluster.

Belongs to the complex I 20 kDa subunit family. In terms of assembly, NDH is composed of at least 16 different subunits, 5 of which are encoded in the nucleus. It depends on [4Fe-4S] cluster as a cofactor.

It is found in the plastid. Its subcellular location is the chloroplast thylakoid membrane. It carries out the reaction a plastoquinone + NADH + (n+1) H(+)(in) = a plastoquinol + NAD(+) + n H(+)(out). The enzyme catalyses a plastoquinone + NADPH + (n+1) H(+)(in) = a plastoquinol + NADP(+) + n H(+)(out). NDH shuttles electrons from NAD(P)H:plastoquinone, via FMN and iron-sulfur (Fe-S) centers, to quinones in the photosynthetic chain and possibly in a chloroplast respiratory chain. The immediate electron acceptor for the enzyme in this species is believed to be plastoquinone. Couples the redox reaction to proton translocation, and thus conserves the redox energy in a proton gradient. The polypeptide is NAD(P)H-quinone oxidoreductase subunit K, chloroplastic (Draba nemorosa (Woodland whitlowgrass)).